Reading from the N-terminus, the 506-residue chain is Maturase K (506 aa).

Belongs to the intron maturase 2 family. MatK subfamily.

The protein localises to the plastid. It localises to the chloroplast. Functionally, usually encoded in the trnK tRNA gene intron. Probably assists in splicing its own and other chloroplast group II introns. This is Maturase K from Trifolium beckwithii (Beckwith's clover).